The following is a 343-amino-acid chain: Selenide, water dikinase (343 aa).

The active site involves Sec16. Position 16 (Sec16) is a non-standard amino acid, selenocysteine. ATP contacts are provided by residues Lys19 and 46–48 (GAE). A Mg(2+)-binding site is contributed by Asp49. Residues Asp66, Asp89, and 137–139 (GHT) contribute to the ATP site. Asp89 provides a ligand contact to Mg(2+). Asp225 is a binding site for Mg(2+).

It belongs to the selenophosphate synthase 1 family. Class I subfamily. As to quaternary structure, homodimer. The cofactor is Mg(2+).

It carries out the reaction hydrogenselenide + ATP + H2O = selenophosphate + AMP + phosphate + 2 H(+). Its function is as follows. Synthesizes selenophosphate from selenide and ATP. This Citrifermentans bemidjiense (strain ATCC BAA-1014 / DSM 16622 / JCM 12645 / Bem) (Geobacter bemidjiensis) protein is Selenide, water dikinase.